A 178-amino-acid chain; its full sequence is Probable chorismate pyruvate-lyase (178 aa).

Substrate is bound by residues M37, R78, L114, and E165.

This sequence belongs to the UbiC family.

It is found in the cytoplasm. It catalyses the reaction chorismate = 4-hydroxybenzoate + pyruvate. It functions in the pathway cofactor biosynthesis; ubiquinone biosynthesis. In terms of biological role, removes the pyruvyl group from chorismate, with concomitant aromatization of the ring, to provide 4-hydroxybenzoate (4HB) for the ubiquinone pathway. In Aeromonas hydrophila subsp. hydrophila (strain ATCC 7966 / DSM 30187 / BCRC 13018 / CCUG 14551 / JCM 1027 / KCTC 2358 / NCIMB 9240 / NCTC 8049), this protein is Probable chorismate pyruvate-lyase.